A 1220-amino-acid chain; its full sequence is DNA polymerase catalytic subunit (1220 aa).

The protein belongs to the DNA polymerase type-B family. As to quaternary structure, forms a complex with the ssDNA-binding protein, the DNA polymerase processivity factor, and the alkaline exonuclease. Interacts with the helicase-primase complex composed of the primase, the helicase and the primase-associated factor; this interaction may coordinate leading and lagging strand DNA synthesis at the replication fork.

The protein localises to the host nucleus. It carries out the reaction DNA(n) + a 2'-deoxyribonucleoside 5'-triphosphate = DNA(n+1) + diphosphate. It catalyses the reaction Endonucleolytic cleavage to 5'-phosphomonoester.. Its function is as follows. Replicates viral genomic DNA. The replication complex is composed of six viral proteins: the DNA polymerase, processivity factor, primase, primase-associated factor, helicase, and ssDNA-binding protein. Additionally, the polymerase contains an intrinsic ribonuclease H (RNase H) activity that specifically degrades RNA/DNA heteroduplexes or duplex DNA substrates in the 5' to 3' direction. Therefore, it can catalyze the excision of the RNA primers that initiate the synthesis of Okazaki fragments at a replication fork during viral DNA replication. The protein is DNA polymerase catalytic subunit (MDV043) of Gallid herpesvirus 2 (strain Chicken/Md5/ATCC VR-987) (GaHV-2).